The sequence spans 138 residues: Host cell factor C1 regulator 1 (138 aa).

An interaction with HCFC1 region spans residues 76–79 (DHPY). Positions 110-119 (IPEALRLLRL) match the Nuclear export signal motif.

As to quaternary structure, interacts with HCFC1. As to expression, widely expressed.

It is found in the cytoplasm. The protein resides in the nucleus. Functionally, regulates HCFC1 activity by modulating its subcellular localization. Overexpression of HCFC1R1 leads to accumulation of HCFC1 in the cytoplasm. HCFC1R1-mediated export may provide the pool of cytoplasmic HCFC1 required for import of virion-derived VP16 into the nucleus. This is Host cell factor C1 regulator 1 (HCFC1R1) from Homo sapiens (Human).